The primary structure comprises 824 residues: Leucine--tRNA ligase (824 aa).

Positions 42–52 (PYPSGRIHMGH) match the 'HIGH' region motif. The 'KMSKS' region signature appears at 581–585 (KMSKS). K584 provides a ligand contact to ATP.

The protein belongs to the class-I aminoacyl-tRNA synthetase family.

It is found in the cytoplasm. It carries out the reaction tRNA(Leu) + L-leucine + ATP = L-leucyl-tRNA(Leu) + AMP + diphosphate. This Geobacter sulfurreducens (strain ATCC 51573 / DSM 12127 / PCA) protein is Leucine--tRNA ligase.